We begin with the raw amino-acid sequence, 268 residues long: Calpain small subunit 1 (268 aa).

Methionine 1 carries the post-translational modification N-acetylmethionine. Serine 6 is modified (phosphoserine). The EF-hand 1; atypical domain occupies 91 to 125 (EANESEEVRQFRRLFAQLAGDDMEVSATELMNILN). Residues alanine 109, aspartate 112, glutamate 114, glutamate 119, aspartate 137, aspartate 152, aspartate 154, threonine 156, lysine 158, and glutamate 163 each contribute to the Ca(2+) site. 4 EF-hand domains span residues 139–172 (FGID…NNIK), 169–204 (NNIK…AGFH), 205–233 (LNEH…ISCL), and 234–268 (VRLD…TMYS). N6-acetyllysine is present on lysine 179. Residues aspartate 182, aspartate 184, serine 186, threonine 188, glutamate 193, and aspartate 225 each contribute to the Ca(2+) site.

As to quaternary structure, homodimer or heterodimer of a large (catalytic) and a small (regulatory) subunit. In presence of calcium, the heterodimer dissociates.

It is found in the cytoplasm. The protein resides in the cell membrane. Its function is as follows. Regulatory subunit of the calcium-regulated non-lysosomal thiol-protease which catalyzes limited proteolysis of substrates involved in cytoskeletal remodeling and signal transduction. Essential for embryonic development. This Homo sapiens (Human) protein is Calpain small subunit 1 (CAPNS1).